The sequence spans 199 residues: Proteasome subunit beta type-2 (199 aa).

It belongs to the peptidase T1B family. The 26S proteasome consists of a 20S proteasome core and two 19S regulatory subunits. The 20S proteasome core is composed of 28 subunits that are arranged in four stacked rings, resulting in a barrel-shaped structure. The two end rings are each formed by seven alpha subunits, and the two central rings are each formed by seven beta subunits. The catalytic chamber with the active sites is on the inside of the barrel.

It localises to the cytoplasm. The protein localises to the nucleus. Non-catalytic component of the proteasome, a multicatalytic proteinase complex which is characterized by its ability to cleave peptides with Arg, Phe, Tyr, Leu, and Glu adjacent to the leaving group at neutral or slightly basic pH. The proteasome has an ATP-dependent proteolytic activity. The sequence is that of Proteasome subunit beta type-2 (pbs-4) from Caenorhabditis elegans.